The sequence spans 158 residues: NAD(P)H-quinone oxidoreductase subunit J, chloroplastic (158 aa).

The protein belongs to the complex I 30 kDa subunit family. As to quaternary structure, NDH is composed of at least 16 different subunits, 5 of which are encoded in the nucleus.

Its subcellular location is the plastid. It is found in the chloroplast thylakoid membrane. It carries out the reaction a plastoquinone + NADH + (n+1) H(+)(in) = a plastoquinol + NAD(+) + n H(+)(out). The catalysed reaction is a plastoquinone + NADPH + (n+1) H(+)(in) = a plastoquinol + NADP(+) + n H(+)(out). In terms of biological role, NDH shuttles electrons from NAD(P)H:plastoquinone, via FMN and iron-sulfur (Fe-S) centers, to quinones in the photosynthetic chain and possibly in a chloroplast respiratory chain. The immediate electron acceptor for the enzyme in this species is believed to be plastoquinone. Couples the redox reaction to proton translocation, and thus conserves the redox energy in a proton gradient. In Chloranthus spicatus (Chulantree), this protein is NAD(P)H-quinone oxidoreductase subunit J, chloroplastic.